Here is a 481-residue protein sequence, read N- to C-terminus: Aspartyl/glutamyl-tRNA(Asn/Gln) amidotransferase subunit B (481 aa).

The protein belongs to the GatB/GatE family. GatB subfamily. Heterotrimer of A, B and C subunits.

The catalysed reaction is L-glutamyl-tRNA(Gln) + L-glutamine + ATP + H2O = L-glutaminyl-tRNA(Gln) + L-glutamate + ADP + phosphate + H(+). It carries out the reaction L-aspartyl-tRNA(Asn) + L-glutamine + ATP + H2O = L-asparaginyl-tRNA(Asn) + L-glutamate + ADP + phosphate + 2 H(+). Allows the formation of correctly charged Asn-tRNA(Asn) or Gln-tRNA(Gln) through the transamidation of misacylated Asp-tRNA(Asn) or Glu-tRNA(Gln) in organisms which lack either or both of asparaginyl-tRNA or glutaminyl-tRNA synthetases. The reaction takes place in the presence of glutamine and ATP through an activated phospho-Asp-tRNA(Asn) or phospho-Glu-tRNA(Gln). This is Aspartyl/glutamyl-tRNA(Asn/Gln) amidotransferase subunit B from Ehrlichia chaffeensis (strain ATCC CRL-10679 / Arkansas).